Here is a 415-residue protein sequence, read N- to C-terminus: Cysteate synthase (415 aa).

At Lys-104 the chain carries N6-(pyridoxal phosphate)lysine. Residues Asn-131 and Thr-376 each contribute to the pyridoxal 5'-phosphate site.

This sequence belongs to the threonine synthase family. Cysteate synthase subfamily. In terms of assembly, homotrimer. Pyridoxal 5'-phosphate serves as cofactor.

The enzyme catalyses O-phospho-L-serine + sulfite + H(+) = L-cysteate + phosphate. It functions in the pathway cofactor biosynthesis; coenzyme M biosynthesis. In terms of biological role, specifically catalyzes the beta-elimination of phosphate from L-phosphoserine and the beta-addition of sulfite to the dehydroalanine intermediate to produce L-cysteate. In Methanothrix thermoacetophila (strain DSM 6194 / JCM 14653 / NBRC 101360 / PT) (Methanosaeta thermophila), this protein is Cysteate synthase.